Consider the following 98-residue polypeptide: Large ribosomal subunit protein uL23 (98 aa).

Belongs to the universal ribosomal protein uL23 family. In terms of assembly, part of the 50S ribosomal subunit. Contacts protein L29, and trigger factor when it is bound to the ribosome.

Its function is as follows. One of the early assembly proteins it binds 23S rRNA. One of the proteins that surrounds the polypeptide exit tunnel on the outside of the ribosome. Forms the main docking site for trigger factor binding to the ribosome. This chain is Large ribosomal subunit protein uL23, found in Rickettsia peacockii (strain Rustic).